A 310-amino-acid polypeptide reads, in one-letter code: Aspartate carbamoyltransferase catalytic subunit (310 aa).

The carbamoyl phosphate site is built by Arg-58 and Thr-59. Lys-86 contributes to the L-aspartate binding site. Carbamoyl phosphate-binding residues include Arg-108, His-136, and Gln-139. Arg-169 and Arg-222 together coordinate L-aspartate. Carbamoyl phosphate-binding residues include Gly-264 and Pro-265.

The protein belongs to the aspartate/ornithine carbamoyltransferase superfamily. ATCase family. In terms of assembly, heterododecamer (2C3:3R2) of six catalytic PyrB chains organized as two trimers (C3), and six regulatory PyrI chains organized as three dimers (R2).

The catalysed reaction is carbamoyl phosphate + L-aspartate = N-carbamoyl-L-aspartate + phosphate + H(+). Its pathway is pyrimidine metabolism; UMP biosynthesis via de novo pathway; (S)-dihydroorotate from bicarbonate: step 2/3. Its function is as follows. Catalyzes the condensation of carbamoyl phosphate and aspartate to form carbamoyl aspartate and inorganic phosphate, the committed step in the de novo pyrimidine nucleotide biosynthesis pathway. This Campylobacter fetus subsp. fetus (strain 82-40) protein is Aspartate carbamoyltransferase catalytic subunit.